The sequence spans 347 residues: NADH-ubiquinone oxidoreductase chain 2 (347 aa).

A run of 10 helical transmembrane segments spans residues 13 to 33 (VFTG…WLGL), 55 to 75 (AAIK…MAIL), 96 to 116 (LMIV…FWVP), 122 to 142 (VPLT…ISIM), 151 to 171 (TNIL…GGLN), 178 to 198 (ILAY…PYNP), 199 to 219 (NITI…FLIL), 237 to 257 (LTWL…LPPL), 277 to 297 (IAPT…ARLI), and 326 to 346 (LPTL…ILSI).

It belongs to the complex I subunit 2 family. As to quaternary structure, core subunit of respiratory chain NADH dehydrogenase (Complex I) which is composed of 45 different subunits. Interacts with TMEM242.

The protein resides in the mitochondrion inner membrane. The catalysed reaction is a ubiquinone + NADH + 5 H(+)(in) = a ubiquinol + NAD(+) + 4 H(+)(out). Functionally, core subunit of the mitochondrial membrane respiratory chain NADH dehydrogenase (Complex I) which catalyzes electron transfer from NADH through the respiratory chain, using ubiquinone as an electron acceptor. Essential for the catalytic activity and assembly of complex I. This Pongo pygmaeus (Bornean orangutan) protein is NADH-ubiquinone oxidoreductase chain 2.